A 213-amino-acid polypeptide reads, in one-letter code: Protein-L-isoaspartate O-methyltransferase (213 aa).

The active site involves S61.

This sequence belongs to the methyltransferase superfamily. L-isoaspartyl/D-aspartyl protein methyltransferase family.

The protein localises to the cytoplasm. It catalyses the reaction [protein]-L-isoaspartate + S-adenosyl-L-methionine = [protein]-L-isoaspartate alpha-methyl ester + S-adenosyl-L-homocysteine. Its function is as follows. Catalyzes the methyl esterification of L-isoaspartyl residues in peptides and proteins that result from spontaneous decomposition of normal L-aspartyl and L-asparaginyl residues. It plays a role in the repair and/or degradation of damaged proteins. This chain is Protein-L-isoaspartate O-methyltransferase, found in Maricaulis maris (strain MCS10) (Caulobacter maris).